A 124-amino-acid chain; its full sequence is UPF0292 protein AF_0905 (124 aa).

In terms of domain architecture, Toprim spans 21–98 (GWVVVVEGKK…IPDVEIKRKI (78 aa)). Residues glutamate 27, aspartate 67, and aspartate 69 each contribute to the Mg(2+) site.

Belongs to the UPF0292 family. Requires Mg(2+) as cofactor.

In Archaeoglobus fulgidus (strain ATCC 49558 / DSM 4304 / JCM 9628 / NBRC 100126 / VC-16), this protein is UPF0292 protein AF_0905.